Reading from the N-terminus, the 296-residue chain is ATP synthase gamma chain (296 aa).

This sequence belongs to the ATPase gamma chain family. In terms of assembly, F-type ATPases have 2 components, CF(1) - the catalytic core - and CF(0) - the membrane proton channel. CF(1) has five subunits: alpha(3), beta(3), gamma(1), delta(1), epsilon(1). CF(0) has three main subunits: a, b and c.

The protein resides in the cell inner membrane. Its function is as follows. Produces ATP from ADP in the presence of a proton gradient across the membrane. The gamma chain is believed to be important in regulating ATPase activity and the flow of protons through the CF(0) complex. In Jannaschia sp. (strain CCS1), this protein is ATP synthase gamma chain.